The primary structure comprises 121 residues: Glycine cleavage system H protein (121 aa).

Residues V16–R98 form the Lipoyl-binding domain. At K57 the chain carries N6-lipoyllysine.

Belongs to the GcvH family. In terms of assembly, the glycine cleavage system is composed of four proteins: P, T, L and H. Requires (R)-lipoate as cofactor.

In terms of biological role, the glycine cleavage system catalyzes the degradation of glycine. The H protein shuttles the methylamine group of glycine from the P protein to the T protein. This Phenylobacterium zucineum (strain HLK1) protein is Glycine cleavage system H protein.